Here is a 271-residue protein sequence, read N- to C-terminus: Pyrroline-5-carboxylate reductase (271 aa).

This sequence belongs to the pyrroline-5-carboxylate reductase family.

Its subcellular location is the cytoplasm. It carries out the reaction L-proline + NADP(+) = (S)-1-pyrroline-5-carboxylate + NADPH + 2 H(+). The catalysed reaction is L-proline + NAD(+) = (S)-1-pyrroline-5-carboxylate + NADH + 2 H(+). Its pathway is amino-acid biosynthesis; L-proline biosynthesis; L-proline from L-glutamate 5-semialdehyde: step 1/1. Functionally, catalyzes the reduction of 1-pyrroline-5-carboxylate (PCA) to L-proline. This Staphylococcus saprophyticus subsp. saprophyticus (strain ATCC 15305 / DSM 20229 / NCIMB 8711 / NCTC 7292 / S-41) protein is Pyrroline-5-carboxylate reductase.